Here is a 508-residue protein sequence, read N- to C-terminus: Photosystem II CP47 reaction center protein (508 aa).

Transmembrane regions (helical) follow at residues 21-36 (AVHIMHTALVAGWAGS), 101-115 (IVFSGLCFLAAIWHW), 140-156 (GIHLFLSGVACFGFGAF), 203-218 (IAAGTLGILAGLFHLS), 237-252 (VLSSSIAAVFFAAFVV), and 457-472 (SFALLFFFGHIWHGAR).

The protein belongs to the PsbB/PsbC family. PsbB subfamily. In terms of assembly, PSII is composed of 1 copy each of membrane proteins PsbA, PsbB, PsbC, PsbD, PsbE, PsbF, PsbH, PsbI, PsbJ, PsbK, PsbL, PsbM, PsbT, PsbX, PsbY, PsbZ, Psb30/Ycf12, at least 3 peripheral proteins of the oxygen-evolving complex and a large number of cofactors. It forms dimeric complexes. Binds multiple chlorophylls. PSII binds additional chlorophylls, carotenoids and specific lipids. is required as a cofactor.

The protein localises to the plastid. The protein resides in the chloroplast thylakoid membrane. In terms of biological role, one of the components of the core complex of photosystem II (PSII). It binds chlorophyll and helps catalyze the primary light-induced photochemical processes of PSII. PSII is a light-driven water:plastoquinone oxidoreductase, using light energy to abstract electrons from H(2)O, generating O(2) and a proton gradient subsequently used for ATP formation. This Buxus microphylla (Littleleaf boxwood) protein is Photosystem II CP47 reaction center protein.